The chain runs to 59 residues: MNFTKLFLLIAMAVLLLTGQSEAGGLKKLGKKLEGAGKRVFNAAEKALPVVAGAKALGK.

A signal peptide spans 1-23 (MNFTKLFLLIAMAVLLLTGQSEA). The propeptide at 58 to 59 (GK) is removed in mature form (AeaeCec2).

Hemolymph (at protein level).

Its subcellular location is the secreted. Its function is as follows. Antimicrobial peptide. Antibacterial activity against Gram-negative bacteria E.coli D22 and D31, E.carotovora, K.pneumoniae, P.aeruginosa, S.typhimurium, E.cloacae B12 and X.campestris and Gram-positive bacteria A.viridans, M.luteus, B.megaterium and S.pyogenes. Possesses antifungal activity against F.oxysporum, F.culmorum and N.crassa, C.albicans, C.neoformans and S.cerevisiae. No activity against Gram-negative S.marcescens Db11, Gram-positive B.cereus, B.subtilis, B.thuringiensis, S.aureus and L.monocytogenes, the fungi A.fumigatus and B.bassiana and C.glabrata. Partially neutralizes lipopolysaccharides (LPS). Exhibits anti-inflammatory properties: inhibits LPS-induced iNOS/NOS2 transcription, nitric oxide (NO) and pro-inflammatory cytokine production in mouse macrophages and human peripheral blood mononuclear cells (PBMCs); inhibits LPS-induced activation of MAPK and NF-kappa-B signaling pathways in mouse macrophages. This Aedes aegypti (Yellowfever mosquito) protein is Cecropin-A (CECA).